The following is a 289-amino-acid chain: HTH-type transcriptional regulator CatR (289 aa).

An HTH lysR-type domain is found at 1–57; it reads MELRHLRYFKVLAETLNFTRAAELLHIAQPPLSRQISQLEDQLGTLLVVRERPLRLT. A DNA-binding region (H-T-H motif) is located at residues 18 to 37; that stretch reads FTRAAELLHIAQPPLSRQIS.

It belongs to the LysR transcriptional regulatory family.

It is found in the cytoplasm. In terms of biological role, positive regulator of the catBC operon that degrades catechol to acetyl-CoA. CatR binds in trans to the catR-catBC promoter-control region in the presence or absence of inducer but only activates the catBC operon in the presence of the inducer, cis-cis-muconate. The sequence is that of HTH-type transcriptional regulator CatR (catR) from Pseudomonas putida (Arthrobacter siderocapsulatus).